We begin with the raw amino-acid sequence, 855 residues long: Inactive rhomboid protein 1 (855 aa).

The disordered stretch occupies residues 1-36; the sequence is MSEARRDSTSSLQRKKPPWLKLDIPSAAPPAAEEPS. Topologically, residues 1 to 411 are cytoplasmic; sequence MSEARRDSTS…HRPFFTYWLT (411 aa). The segment covering 25–36 has biased composition (low complexity); the sequence is PSAAPPAAEEPS. Phosphoserine is present on residues S76 and S176. 2 positions are modified to phosphothreonine: T180 and T183. Residue S390 is modified to Phosphoserine. Residues 412–432 form a helical membrane-spanning segment; that stretch reads FVHSLVTVLAVCIYGIAPVGF. Residues 433–655 lie on the Lumenal side of the membrane; it reads SQHETVDSVL…NPEVPDQFYR (223 aa). N583 is a glycosylation site (N-linked (GlcNAc...) asparagine). A helical transmembrane segment spans residues 656–676; the sequence is LWLSLFLHAGILHCLVSICFQ. Residues 677–691 lie on the Cytoplasmic side of the membrane; the sequence is MTVLRDLEKLAGWHR. Residues 692 to 712 traverse the membrane as a helical segment; sequence IAIIYLLSGVTGNLASAIFLP. Residues 713-714 are Lumenal-facing; the sequence is YR. A helical membrane pass occupies residues 715-735; sequence AEVGPAGSQFGILACLFVELF. The Cytoplasmic segment spans residues 736–746; sequence QSWQILARPWR. Residues 747-767 form a helical membrane-spanning segment; sequence AFFKLLAVVLFLFTFGLLPWI. At 768-772 the chain is on the lumenal side; the sequence is DNFAH. A helical membrane pass occupies residues 773–793; sequence ISGFISGLFLSFAFLPYISFG. At 794–803 the chain is on the cytoplasmic side; sequence KFDLYRKRCQ. Residues 804–824 traverse the membrane as a helical segment; that stretch reads IIVFQVVFLGLLAGLVVLFYF. Over 825-855 the chain is Lumenal; the sequence is YPVRCEWCEFLTCIPFTDKFCEKYELDAQLH.

It belongs to the peptidase S54 family. As to quaternary structure, homodimer, or homooligomer. Interacts with TGFA and HBEGF. Interacts with EGF; may retain EGF in the endoplasmic reticulum and regulates its degradation through the endoplasmic reticulum-associated degradation (ERAD). Interacts (via cytoplasmic N-terminus) with FRMD8/iTAP; this interaction leads to mutual protein stabilization. Interacts with ADAM17/TACE.

It is found in the endoplasmic reticulum membrane. It localises to the golgi apparatus membrane. Regulates ADAM17 protease, a sheddase of the epidermal growth factor (EGF) receptor ligands and TNF, thereby plays a role in sleep, cell survival, proliferation, migration and inflammation. Does not exhibit any protease activity on its own. The protein is Inactive rhomboid protein 1 (RHBDF1) of Plecturocebus moloch (Dusky titi monkey).